A 314-amino-acid polypeptide reads, in one-letter code: Homoserine O-acetyltransferase (314 aa).

Residue Cys-142 is the Acyl-thioester intermediate of the active site. Residues Lys-163 and Ser-192 each coordinate substrate. His-235 functions as the Proton acceptor in the catalytic mechanism. The active site involves Glu-237. Arg-249 contacts substrate.

This sequence belongs to the MetA family.

The protein resides in the cytoplasm. It catalyses the reaction L-homoserine + acetyl-CoA = O-acetyl-L-homoserine + CoA. The protein operates within amino-acid biosynthesis; L-methionine biosynthesis via de novo pathway; O-acetyl-L-homoserine from L-homoserine: step 1/1. Functionally, transfers an acetyl group from acetyl-CoA to L-homoserine, forming acetyl-L-homoserine. The polypeptide is Homoserine O-acetyltransferase (Streptococcus mutans serotype c (strain ATCC 700610 / UA159)).